A 661-amino-acid chain; its full sequence is 72 kDa type IV collagenase (661 aa).

The N-terminal stretch at 1 to 30 (MTEARVSRGALAALLRALCALGCLLGRAAA) is a signal peptide. Residues 31–110 (APSPIIKFPG…PRCGNPDVAN (80 aa)) constitute a propeptide, activation peptide. Positions 101–108 (PRCGNPDV) match the Cysteine switch motif. A Zn(2+)-binding site is contributed by C103. The tract at residues 111-222 (YNFFPRKPKW…LRTLGEGQVV (112 aa)) is collagenase-like 1. The Ca(2+) site is built by D135 and D169. 2 residues coordinate Zn(2+): H179 and D181. Residues D186 and G187 each contribute to the Ca(2+) site. H194 contacts Zn(2+). G201, G203, and D205 together coordinate Ca(2+). H207 is a Zn(2+) binding site. Positions 209, 210, and 212 each coordinate Ca(2+). The interval 223-397 (RVKYGNADGE…WGFCPDQGYS (175 aa)) is collagen-binding. Fibronectin type-II domains follow at residues 229 to 277 (ADGE…FCPH), 287 to 335 (ADGQ…FCPE), and 345 to 393 (SEGA…FCPD). Intrachain disulfides connect C234–C260, C248–C275, C292–C318, C306–C333, C350–C376, and C364–C391. The interval 398-466 (LFLVAAHEFG…GPTPTLGPVT (69 aa)) is collagenase-like 2. H404 is a binding site for Zn(2+). E405 is an active-site residue. Zn(2+)-binding residues include H408 and H414. A required for inhibitor TIMP2 binding region spans residues 415–661 (SQDPGALMAP…GSIKSDWLGC (247 aa)). Hemopexin repeat units lie at residues 469–517 (LCKQ…WPEL), 518–564 (PEKI…GLPP), 566–614 (VQKV…WNAI), and 615–661 (PDNL…WLGC). A disulfide bridge links C470 with C661. Residues D477, D522, and D570 each contribute to the Ca(2+) site. A glycan (N-linked (GlcNAc...) asparagine) is linked at N574. D619 is a binding site for Ca(2+). A glycan (N-linked (GlcNAc...) asparagine) is linked at N643.

It belongs to the peptidase M10A family. In terms of assembly, interacts (via the C-terminal hemopexin-like domains-containing region) with the integrin alpha-V/beta-3; the interaction promotes vascular invasion in angiogenic vessels and melamoma cells. Interacts (via the C-terminal PEX domain) with TIMP2 (via the C-terminal); the interaction inhibits the degradation activity. Interacts with GSK3B. Ca(2+) is required as a cofactor. The cofactor is Zn(2+). In terms of processing, phosphorylation on multiple sites modulates enzymatic activity. Phosphorylated by PKC in vitro. Post-translationally, the propeptide is processed by MMP14 (MT-MMP1) and MMP16 (MT-MMP3). Autocatalytic cleavage in the C-terminal produces the anti-angiogenic peptide, PEX. This processing appears to be facilitated by binding integrinv/beta3.

It localises to the secreted. The protein resides in the extracellular space. Its subcellular location is the extracellular matrix. The protein localises to the membrane. It is found in the nucleus. It catalyses the reaction Cleavage of gelatin type I and collagen types IV, V, VII, X. Cleaves the collagen-like sequence Pro-Gln-Gly-|-Ile-Ala-Gly-Gln.. In terms of biological role, ubiquitinous metalloproteinase that is involved in diverse functions such as remodeling of the vasculature, angiogenesis, tissue repair, tumor invasion, inflammation, and atherosclerotic plaque rupture. As well as degrading extracellular matrix proteins, can also act on several nonmatrix proteins such as big endothelial 1 and beta-type CGRP promoting vasoconstriction. Also cleaves KISS at a Gly-|-Leu bond. Appears to have a role in myocardial cell death pathways. Contributes to myocardial oxidative stress by regulating the activity of GSK3beta. Cleaves GSK3beta in vitro. Involved in the formation of the fibrovascular tissues. PEX, the C-terminal non-catalytic fragment of MMP2, possesses anti-angiogenic and anti-tumor properties and inhibits cell migration and cell adhesion to FGF2 and vitronectin. Ligand for integrin alpha-v/beta-3 on the surface of blood vessels. This chain is 72 kDa type IV collagenase (MMP2), found in Bos taurus (Bovine).